The following is a 389-amino-acid chain: MGTNLSVPNPLGFFPDHQLDPAFGANSNNPDWDFNPNKDQWPEANQVGAGAFGPGFTPPHGGLLGWSPQAQGILTTVPAAPPPASTNRQSGRQPTPISPPLRDSHPQAMQWNSTTFHQALLDPRVRGLYFPAGGSSSGTVNPVPTIVSPISSIFSRTGDPAPNMESTTSGFLGPLLVLQAGFFLLTRILTIPQSLDSWWTSLNFLGEAPTCPGQNSQSPTSNHSPTSCPPICPGYRWMCLRRFIIFLFILLLCLIFLLVLLDYQGMLPVCPLLPGTSTTSTGPCKTCTIPAQGTSMFPSCCCTKPSDGNCTCIPIPSSWAFARFLWEWASVRFSWLSLLVPFVQWFAGLSPTVWLSVIWMMWYWGPSLYNILSPFLPLLPIFFCLWVYI.

N-acetylmethionine is present on Met1. Residue Gly2 is the site of N-myristoyl glycine; by host attachment. Residues 2 to 108 (GTNLSVPNPL…PPLRDSHPQA (107 aa)) form a pre-S1 region. A pre-S region spans residues 2–163 (GTNLSVPNPL…FSRTGDPAPN (162 aa)). At 2–170 (GTNLSVPNPL…APNMESTTSG (169 aa)) the chain is on the virion surface; in external conformation side. The Intravirion; in internal conformation portion of the chain corresponds to 2 to 242 (GTNLSVPNPL…PGYRWMCLRR (241 aa)). The interval 74–105 (LTTVPAAPPPASTNRQSGRQPTPISPPLRDSH) is disordered. Residues 85–95 (STNRQSGRQPT) show a composition bias toward polar residues. Residues 109–163 (MQWNSTTFHQALLDPRVRGLYFPAGGSSSGTVNPVPTIVSPISSIFSRTGDPAPN) form a pre-S2 region. A helical membrane pass occupies residues 171–191 (FLGPLLVLQAGFFLLTRILTI). Topologically, residues 192–242 (PQSLDSWWTSLNFLGEAPTCPGQNSQSPTSNHSPTSCPPICPGYRWMCLRR) are intravirion; in external conformation. The chain crosses the membrane as a helical span at residues 243 to 263 (FIIFLFILLLCLIFLLVLLDY). Topologically, residues 264–337 (QGMLPVCPLL…WASVRFSWLS (74 aa)) are virion surface. An N-linked (GlcNAc...) asparagine; by host glycan is attached at Asn309. Residues 338 to 358 (LLVPFVQWFAGLSPTVWLSVI) traverse the membrane as a helical segment. The Intravirion segment spans residues 359–364 (WMMWYW). Residues 365–387 (GPSLYNILSPFLPLLPIFFCLWV) traverse the membrane as a helical segment. Residues 388–389 (YI) lie on the Virion surface side of the membrane.

Belongs to the orthohepadnavirus major surface antigen family. In terms of assembly, in its internal form (Li-HBsAg), interacts with the capsid protein and with the isoform S. Interacts with host chaperone CANX. As to quaternary structure, associates with host chaperone CANX through its pre-S2 N glycan; this association may be essential for isoform M proper secretion. Interacts with isoform L. Interacts with the antigens of satellite virus HDV (HDVAgs); this interaction is required for encapsidation of HDV genomic RNA. Post-translationally, isoform M is N-terminally acetylated by host at a ratio of 90%, and N-glycosylated by host at the pre-S2 region. In terms of processing, myristoylated.

The protein localises to the virion membrane. Its function is as follows. The large envelope protein exists in two topological conformations, one which is termed 'external' or Le-HBsAg and the other 'internal' or Li-HBsAg. In its external conformation the protein attaches the virus to cell receptors and thereby initiating infection. This interaction determines the species specificity and liver tropism. This attachment induces virion internalization predominantly through caveolin-mediated endocytosis. The large envelope protein also assures fusion between virion membrane and endosomal membrane. In its internal conformation the protein plays a role in virion morphogenesis and mediates the contact with the nucleocapsid like a matrix protein. In terms of biological role, the middle envelope protein plays an important role in the budding of the virion. It is involved in the induction of budding in a nucleocapsid independent way. In this process the majority of envelope proteins bud to form subviral lipoprotein particles of 22 nm of diameter that do not contain a nucleocapsid. The chain is Large envelope protein from Hepatitis B virus genotype C subtype adr (isolate Japan/A4/1994) (HBV-C).